The primary structure comprises 142 residues: MSESLVVCDVAEDLVEKLRKFRFRKETNNAAIIMKIDKDKRLVVLDEELEGISPDELKDELPERQPRFIVYSYKYQHDDGRVSYPLCFIFSSPVGCKPEQQMMYAGSKNKLVQTAELTKVFEIRNTEDLTEEWLREKLGFFH.

Position 2 is an N-acetylserine (serine 2). An ADF-H domain is found at 4-139; sequence SLVVCDVAED…TEEWLREKLG (136 aa).

Belongs to the actin-binding proteins ADF family. GMF subfamily. Post-translationally, phosphorylated; stimulated by phorbol ester.

Its function is as follows. This protein causes differentiation of brain cells, stimulation of neural regeneration, and inhibition of proliferation of tumor cells. The polypeptide is Glia maturation factor beta (GMFB) (Homo sapiens (Human)).